The chain runs to 365 residues: Beta-parvin (365 aa).

Positions 1 to 12 (MSSAPPRSPTPR) are enriched in pro residues. The disordered stretch occupies residues 1-52 (MSSAPPRSPTPRAPKMKKDESFLGKLGGTLARKKKTREVTDLQEEGKSAINS). S8 carries the phosphoserine modification. Residues 37 to 47 (REVTDLQEEGK) show a composition bias toward basic and acidic residues. 2 Calponin-homology (CH) domains span residues 88-195 (KELV…MHFR) and 255-362 (NLVK…TKYK).

This sequence belongs to the parvin family. Interacts with ILK, ARHGEF6, PXN (via LD motifs), ACTN2 and actin. Interacts with DYSF. Phosphorylated by ILK. As to expression, expressed predominantly in heart and moderately in spleen, lung and skeletal muscle.

The protein resides in the cell junction. The protein localises to the focal adhesion. It localises to the cell membrane. Its subcellular location is the cytoplasm. It is found in the cytoskeleton. The protein resides in the cell projection. The protein localises to the lamellipodium. It localises to the myofibril. Its subcellular location is the sarcomere. It is found in the z line. In terms of biological role, adapter protein that plays a role in integrin signaling via ILK and in activation of the GTPases CDC42 and RAC1 by guanine exchange factors, such as ARHGEF6. Is involved in the reorganization of the actin cytoskeleton and formation of lamellipodia. Plays a role in cell adhesion, cell spreading, establishment or maintenance of cell polarity, and cell migration. The sequence is that of Beta-parvin (Parvb) from Mus musculus (Mouse).